Consider the following 223-residue polypeptide: Small ribosomal subunit protein uS3 (223 aa).

The KH type-2 domain maps to 39-117 (IREHLRKKPS…RPELNAKLVA (79 aa)).

The protein belongs to the universal ribosomal protein uS3 family. Part of the 30S ribosomal subunit. Forms a tight complex with proteins S10 and S14.

Binds the lower part of the 30S subunit head. Binds mRNA in the 70S ribosome, positioning it for translation. The chain is Small ribosomal subunit protein uS3 from Chlamydia caviae (strain ATCC VR-813 / DSM 19441 / 03DC25 / GPIC) (Chlamydophila caviae).